A 350-amino-acid chain; its full sequence is Thymidine kinase (350 aa).

15 to 22 (GAHGLGKT) provides a ligand contact to ATP. The Proton acceptor role is filled by Glu-44. Gln-88 is a substrate binding site. Arg-178 is a binding site for ATP. Arg-184 lines the substrate pocket.

It belongs to the herpesviridae thymidine kinase family. In terms of assembly, homodimer.

It carries out the reaction thymidine + ATP = dTMP + ADP + H(+). In terms of biological role, catalyzes the transfer of the gamma-phospho group of ATP to thymidine to generate dTMP in the salvage pathway of pyrimidine synthesis. The dTMP serves as a substrate for DNA polymerase during viral DNA replication. Allows the virus to be reactivated and to grow in non-proliferative cells lacking a high concentration of phosphorylated nucleic acid precursors. This is Thymidine kinase from Bos taurus (Bovine).